The sequence spans 438 residues: 5-methylthioadenosine/S-adenosylhomocysteine deaminase (438 aa).

Zn(2+)-binding residues include histidine 66 and histidine 68. Residues glutamate 95, arginine 148, and histidine 188 each contribute to the substrate site. Residue histidine 215 participates in Zn(2+) binding. Residues glutamate 218 and aspartate 305 each coordinate substrate. Aspartate 305 serves as a coordination point for Zn(2+).

The protein belongs to the metallo-dependent hydrolases superfamily. MTA/SAH deaminase family. The cofactor is Zn(2+).

The enzyme catalyses S-adenosyl-L-homocysteine + H2O + H(+) = S-inosyl-L-homocysteine + NH4(+). The catalysed reaction is S-methyl-5'-thioadenosine + H2O + H(+) = S-methyl-5'-thioinosine + NH4(+). Catalyzes the deamination of 5-methylthioadenosine and S-adenosyl-L-homocysteine into 5-methylthioinosine and S-inosyl-L-homocysteine, respectively. Is also able to deaminate adenosine. The protein is 5-methylthioadenosine/S-adenosylhomocysteine deaminase of Halalkalibacterium halodurans (strain ATCC BAA-125 / DSM 18197 / FERM 7344 / JCM 9153 / C-125) (Bacillus halodurans).